A 219-amino-acid chain; its full sequence is uncharacterized protein (219 aa).

The N-terminal stretch at 1 to 15 (MYVLFLLSWVLVAGA) is a signal peptide. N118 is a glycosylation site (N-linked (GlcNAc...) asparagine). Positions 138-174 (GEVGEDPGKRARKRRLGLPIGEPGEDVGKRMRQRQQG) are disordered.

Component of the acid-insoluble and acid-soluble organic matrix of calcified layers of the shell (at protein level).

Its subcellular location is the secreted. This is an uncharacterized protein from Lottia gigantea (Giant owl limpet).